The primary structure comprises 156 residues: MVSVLDKINVTELRPGNMLLQQPPFLFVDRILEFDEETITCSKYLSHNEPFFSGHFPTQPIMPGVLIIEFAAQASLLLTMLQLNELEPLMGYLVKTENFTFHALAEPGTELEAKVKMLKKMGNYYTTQVTVRRSDNKKKVAKGQLVFYLDEEGKER.

The active site involves H55.

The protein belongs to the thioester dehydratase family. FabZ subfamily.

This is an uncharacterized protein from Halalkalibacterium halodurans (strain ATCC BAA-125 / DSM 18197 / FERM 7344 / JCM 9153 / C-125) (Bacillus halodurans).